The primary structure comprises 136 residues: 5-hydroxyisourate hydrolase (136 aa).

Positions 1-22 are cleaved as a signal peptide; that stretch reads MKRHILATVIASLVAAPAMALA. Residues His-31, Arg-69, and Tyr-133 each coordinate substrate.

It belongs to the transthyretin family. 5-hydroxyisourate hydrolase subfamily. In terms of assembly, homotetramer.

Its subcellular location is the periplasm. The enzyme catalyses 5-hydroxyisourate + H2O = 5-hydroxy-2-oxo-4-ureido-2,5-dihydro-1H-imidazole-5-carboxylate + H(+). Functionally, catalyzes the hydrolysis of 5-hydroxyisourate (HIU) to 2-oxo-4-hydroxy-4-carboxy-5-ureidoimidazoline (OHCU). The sequence is that of 5-hydroxyisourate hydrolase (hiuH) from Salmonella dublin.